We begin with the raw amino-acid sequence, 501 residues long: L-ornithine N(5)-monooxygenase (501 aa).

Positions 1–31 (MESVERKSESSYLGMRNMQPEQRLSLDPPRL) are disordered. FAD contacts are provided by residues 83–91 (ERQKQFAWH) and Gln102. Lys107 contacts substrate. Residue Val168 participates in FAD binding. NADP(+) is bound by residues 254–257 (SGQS) and Arg279. Substrate contacts are provided by residues 293–296 (NEIF) and Asn323. 323–325 (NYS) lines the NADP(+) pocket. The tract at residues 366–390 (EHHGPQSRMRIHLKSSKPESEGAAN) is disordered. Basic and acidic residues predominate over residues 381–390 (SKPESEGAAN). Position 466 to 468 (466 to 468 (SLL)) interacts with FAD. Substrate is bound at residue Ser469.

It belongs to the lysine N(6)-hydroxylase/L-ornithine N(5)-oxygenase family. In terms of assembly, homotetramer. It depends on FAD as a cofactor.

The catalysed reaction is L-ornithine + NADPH + O2 = N(5)-hydroxy-L-ornithine + NADP(+) + H2O. It catalyses the reaction L-ornithine + NADH + O2 = N(5)-hydroxy-L-ornithine + NAD(+) + H2O. The protein operates within siderophore biosynthesis; ferrichrome biosynthesis. Its function is as follows. L-ornithine N(5)-monooxygenase; part of the siderophore biosynthetic pathway. Aspergillus fumigatus produces four types of siderophores, low-molecular-mass iron chelators, including excreted fusarinine C (FsC) and triacetylfusarinine C (TAFC) for iron uptake; and intacellular ferricrocin (FC) for hyphal and hydroxyferricrocin (HFC) for conidial iron distribution and storage. TAFC consists of three N(2)-acetyl-N(5)-anhydromevalonyl-N(5)-hydroxyornithine residues cyclically linked by ester bonds; FC is a cyclic hexapeptide with the structure Gly-Ser-Gly-(N(5)-acetyl-N(5)-hydroxyornithine)x3. The biosynthesis of all four siderophores depends on the hydroxylation of ornithine, catalyzed by the monooxygenase sidA. SidA is highly specific for its substrate, only hydrolyzing l-ornithine, and has preference for NADPH over NADH, NADPH playing a role in stabilization of the C4a-hydroperoxyflavin intermediate. Subsequently, the pathways for biosynthesis of extra- and intracellular siderophores split. For biosynthesis of extracellular siderophores, the transacylase sidF transfers anhydromevalonyl to N(5)-hydroxyornithine. The required anhydromevalonyl-CoA moiety is derived from mevalonate by CoA ligation and dehydration catalyzed by sidI and sidH respectively. The acetylation of N(5)-hydroxyornithine for FC biosynthesis involves the constitutively expressed sidL. FC is hydroxylated to HFC by an as yet uncharacterized enzyme during conidiation. Assembly of fusarinine C (FsC) and FC is catalyzed by two different nonribosomal peptide synthetases (NRPS), sidD and sidC respectively. Subsequently, sidG catalyzes N2-acetylation of FsC for forming TAFC. Both extra- and intracellular siderophores are crucial for growth during iron limitation and virulence. The polypeptide is L-ornithine N(5)-monooxygenase (Aspergillus fumigatus (strain ATCC MYA-4609 / CBS 101355 / FGSC A1100 / Af293) (Neosartorya fumigata)).